Consider the following 464-residue polypeptide: Divalent metal cation transporter MntH (464 aa).

11 helical membrane passes run 57-77 (ILIA…AGGA), 82-102 (SLLS…SMAA), 125-145 (GIIL…AEII), 157-177 (IPLV…LLLM), 186-206 (AIVA…VFLA), 229-249 (MLYL…LYLG), 281-301 (LTIA…LFFG), 321-341 (IVGA…LLSS), 376-396 (LLSV…EAKI), 399-419 (LLTL…VPLV), and 443-463 (VATV…VGVI).

The protein belongs to the NRAMP family.

It localises to the cell membrane. H(+)-stimulated, divalent metal cation uptake system. The protein is Divalent metal cation transporter MntH of Levilactobacillus brevis (Lactobacillus brevis).